The sequence spans 499 residues: Glycerol kinase (499 aa).

Thr13 serves as a coordination point for ADP. 3 residues coordinate ATP: Thr13, Thr14, and Ser15. Thr13 provides a ligand contact to sn-glycerol 3-phosphate. Arg17 contacts ADP. 4 residues coordinate sn-glycerol 3-phosphate: Arg83, Glu84, Tyr135, and Asp244. Glycerol contacts are provided by Arg83, Glu84, Tyr135, Asp244, and Gln245. ADP contacts are provided by Thr266 and Gly309. ATP is bound by residues Thr266, Gly309, Gln313, and Gly410. ADP contacts are provided by Gly410 and Asn414.

It belongs to the FGGY kinase family.

It catalyses the reaction glycerol + ATP = sn-glycerol 3-phosphate + ADP + H(+). Its pathway is polyol metabolism; glycerol degradation via glycerol kinase pathway; sn-glycerol 3-phosphate from glycerol: step 1/1. Inhibited by fructose 1,6-bisphosphate (FBP). Functionally, key enzyme in the regulation of glycerol uptake and metabolism. Catalyzes the phosphorylation of glycerol to yield sn-glycerol 3-phosphate. The polypeptide is Glycerol kinase (Paraburkholderia phymatum (strain DSM 17167 / CIP 108236 / LMG 21445 / STM815) (Burkholderia phymatum)).